We begin with the raw amino-acid sequence, 411 residues long: Peptidase T (411 aa).

His78 contacts Zn(2+). Asp80 is a catalytic residue. Zn(2+) is bound at residue Asp140. The active-site Proton acceptor is Glu173. Residues Glu174, Asp196, and His379 each coordinate Zn(2+).

It belongs to the peptidase M20B family. It depends on Zn(2+) as a cofactor.

Its subcellular location is the cytoplasm. The enzyme catalyses Release of the N-terminal residue from a tripeptide.. In terms of biological role, cleaves the N-terminal amino acid of tripeptides. The polypeptide is Peptidase T (Yersinia pseudotuberculosis serotype O:3 (strain YPIII)).